The following is a 282-amino-acid chain: Probable protein phosphatase 2C 10 (282 aa).

The region spanning 34-281 (KFGYSLVKGK…DDISCIVVRL (248 aa)) is the PPM-type phosphatase domain. Residues aspartate 71, glycine 72, aspartate 233, and aspartate 272 each coordinate Mn(2+).

This sequence belongs to the PP2C family. Mg(2+) is required as a cofactor. The cofactor is Mn(2+).

It carries out the reaction O-phospho-L-seryl-[protein] + H2O = L-seryl-[protein] + phosphate. The catalysed reaction is O-phospho-L-threonyl-[protein] + H2O = L-threonyl-[protein] + phosphate. This Arabidopsis thaliana (Mouse-ear cress) protein is Probable protein phosphatase 2C 10.